We begin with the raw amino-acid sequence, 402 residues long: CCA-adding enzyme (402 aa).

Positions 32 and 35 each coordinate ATP. Residues glycine 32 and arginine 35 each contribute to the CTP site. Residues aspartate 45 and aspartate 47 each contribute to the Mg(2+) site. 5 residues coordinate ATP: arginine 116, aspartate 159, arginine 162, arginine 165, and arginine 168. The CTP site is built by arginine 116, aspartate 159, arginine 162, arginine 165, and arginine 168.

This sequence belongs to the tRNA nucleotidyltransferase/poly(A) polymerase family. Bacterial CCA-adding enzyme type 3 subfamily. As to quaternary structure, homodimer. Mg(2+) serves as cofactor.

The catalysed reaction is a tRNA precursor + 2 CTP + ATP = a tRNA with a 3' CCA end + 3 diphosphate. It catalyses the reaction a tRNA with a 3' CCA end + 2 CTP + ATP = a tRNA with a 3' CCACCA end + 3 diphosphate. Its function is as follows. Catalyzes the addition and repair of the essential 3'-terminal CCA sequence in tRNAs without using a nucleic acid template. Adds these three nucleotides in the order of C, C, and A to the tRNA nucleotide-73, using CTP and ATP as substrates and producing inorganic pyrophosphate. tRNA 3'-terminal CCA addition is required both for tRNA processing and repair. Also involved in tRNA surveillance by mediating tandem CCA addition to generate a CCACCA at the 3' terminus of unstable tRNAs. While stable tRNAs receive only 3'-terminal CCA, unstable tRNAs are marked with CCACCA and rapidly degraded. This is CCA-adding enzyme from Streptococcus pyogenes serotype M2 (strain MGAS10270).